Here is a 231-residue protein sequence, read N- to C-terminus: Fibrillarin-like rRNA/tRNA 2'-O-methyltransferase (231 aa).

S-adenosyl-L-methionine is bound by residues 88–89 (TT), 106–107 (EF), 131–132 (DA), and 151–154 (DVAQ).

This sequence belongs to the methyltransferase superfamily. Fibrillarin family. In terms of assembly, interacts with nop5. Component of box C/D small ribonucleoprotein (sRNP) particles that contain rpl7ae, FlpA and nop5, plus a guide RNA.

Involved in pre-rRNA and tRNA processing. Utilizes the methyl donor S-adenosyl-L-methionine to catalyze the site-specific 2'-hydroxyl methylation of ribose moieties in rRNA and tRNA. Site specificity is provided by a guide RNA that base pairs with the substrate. Methylation occurs at a characteristic distance from the sequence involved in base pairing with the guide RNA. This is Fibrillarin-like rRNA/tRNA 2'-O-methyltransferase from Methanococcus aeolicus (strain ATCC BAA-1280 / DSM 17508 / OCM 812 / Nankai-3).